The following is a 426-amino-acid chain: Vacuole membrane protein hfl11 (426 aa).

Transmembrane regions (helical) follow at residues 39 to 59 (SVVRILMMIVIYSSVSFLSVY), 73 to 93 (IYEAFALYCFFCLLIDYLGGE), 133 to 153 (GILQYTWLKPFLVIAVLLTKV), 172 to 192 (IGLVYNISITLSLYSLTTFWV), and 223 to 243 (VLSITNWLGLLNGTGWIYSLL). Ser-364 is modified (phosphoserine). The ATG8-interacting region stretch occupies residues 386-409 (LQFEIDDEMEPLYNQAKQMRYGDY).

This sequence belongs to the TMEM184 family. As to quaternary structure, interacts with atg8.

Its subcellular location is the vacuole membrane. In terms of biological role, vacuole membrane protein that recruits ATG8 to facilitate the degradation of vacuolar integral membrane proteins during early-stationary vacuole turnover (EVT) when cells enter stationary phase. This chain is Vacuole membrane protein hfl11, found in Schizosaccharomyces pombe (strain 972 / ATCC 24843) (Fission yeast).